We begin with the raw amino-acid sequence, 90 residues long: RNA-binding protein Hfq (90 aa).

The 60-residue stretch at 9–68 (EPFLNTLRKEKVPVSIYLVNGIKLQGQIESFDQFVVLLRNNVNQMVYKHAISTIVPARRV) folds into the Sm domain.

Belongs to the Hfq family. As to quaternary structure, homohexamer.

Functionally, RNA chaperone that binds small regulatory RNA (sRNAs) and mRNAs to facilitate mRNA translational regulation in response to envelope stress, environmental stress and changes in metabolite concentrations. Also binds with high specificity to tRNAs. In Halorhodospira halophila (strain DSM 244 / SL1) (Ectothiorhodospira halophila (strain DSM 244 / SL1)), this protein is RNA-binding protein Hfq.